The following is a 345-amino-acid chain: D-amino-acid oxidase (345 aa).

Positions 10, 13, 49, 53, and 55 each coordinate FAD. (R)-lactate contacts are provided by Y230 and R290. Residues Y230 and R290 each contribute to the anthranilate site. R290, S317, G320, Y321, and Q322 together coordinate FAD. A Microbody targeting signal motif is present at residues A343 to L345.

It belongs to the DAMOX/DASOX family. FAD serves as cofactor.

It is found in the peroxisome matrix. The enzyme catalyses a D-alpha-amino acid + O2 + H2O = a 2-oxocarboxylate + H2O2 + NH4(+). It catalyses the reaction D-methionine + O2 + H2O = 4-methylsulfanyl-2-oxobutanoate + H2O2 + NH4(+). Functionally, catalyzes the oxidative deamination of D-amino acids with broad substrate specificity. Enables the organism to utilize D-amino acids as a source of nutrients. Enables the organism to utilize D-alanine as a nitrogen source, although it is not strictly required for this process. Also enables utilization of D-alanine as a carbon source. This chain is D-amino-acid oxidase, found in Candida boidinii (Yeast).